Here is a 131-residue protein sequence, read N- to C-terminus: Arsenate reductase 2 (131 aa).

Residues cysteine 10, cysteine 82, and cysteine 89 each act as nucleophile in the active site. Intrachain disulfides connect cysteine 10/cysteine 82 and cysteine 82/cysteine 89.

This sequence belongs to the low molecular weight phosphotyrosine protein phosphatase family. Thioredoxin-coupled ArsC subfamily.

It is found in the cytoplasm. It carries out the reaction arsenate + [thioredoxin]-dithiol + H(+) = arsenite + [thioredoxin]-disulfide + H2O. Its function is as follows. Catalyzes the reduction of arsenate [As(V)] to arsenite [As(III)]. This is Arsenate reductase 2 from Staphylococcus epidermidis (strain ATCC 35984 / DSM 28319 / BCRC 17069 / CCUG 31568 / BM 3577 / RP62A).